Consider the following 211-residue polypeptide: MFAEFGVLNFWTYVVGAFFIVLVPGPNTLFVLKTGIGHGVKKGYLAATGVFIGDAVLMFLAWAGVAALIQTTPVLFNIVRYLGALYLLWLGGKMLWSVIMRKNSAHAGGAEPSSTILKRSLVLSLTNPKAILFYVSFFVQFIDVSATNTGTSFLILATTLELISFMYMSFLIFSGAFVTRYLKTKKKLAKLGNGLIGLLFVGFAARLASLH.

The next 6 membrane-spanning stretches (helical) occupy residues 5 to 25, 49 to 69, 72 to 92, 122 to 142, 153 to 173, and 191 to 211; these read FGVL…LVPG, GVFI…AALI, TPVL…WLGG, VLSL…VQFI, FLIL…FLIF, and LGNG…ASLH.

This sequence belongs to the Rht family.

It is found in the cell inner membrane. The enzyme catalyses L-leucine(in) + H(+)(out) = L-leucine(out) + H(+)(in). Functionally, exporter of leucine. This Enterobacter sp. (strain 638) protein is Leucine efflux protein (leuE).